The following is a 691-amino-acid chain: MEEPEDNPYIRDPPLDFEPVDELDAASATRQVETLREAIRFHDYRYYQLADPVISDRAYDQLFERLERLESKFDRSSATSPTQRVGGEPLDELETVEHVAPMRSIESSVEVDDIRDFDTRIQERLAAAGYEGPVRYLCEPKFDGLSVELVYEEGELSRAATRGDGQEGDDVTANVRTIRSVPLTLDGDCPSFLAVRGEIFMPKDAFQEYNRERLERGEEPFSNPRNAAAGTLRQLDPSVTAERPLDCFVFDILDDGGRGFETRMAEHEAVESWGFQVDDHTARVDDIEAAIAFREEMLDGRASLDYEIDGIVIKLDRKDACALLGATARAPRWAYAYKFPARTEETTVRDIVLQVGRTGRLTPVALLDPVEVSGVEVSRATLHNPQQIAELGVGIGDRVTLKRAGDVIPYIEAVVDSEREAHFEFPDRCPVCESPLERDGPLAYCTGGVACPAQLRRAVEHYASRSGLDIEGLGESAVDQLVDAGLVERLPDLYDLSVADVAELDGWGRTSAENLLEELEASTEPPLPAFLSALGIPGVGTTTAADIAREFGTLDAVMDATAEELRAVDGIGPTLGGEIAEFFDSDRNQQVIEQLRKRGVDPEPAETAGDALSGQTFVFTGSLDGLTREEAHELVETSGGTATGSVSGNTDYLVVGDSPGQRKREAANEHGVETLSQSDFESLLESHGIEI.

Residues 56–60 (DRAYD), 104–105 (SI), and E139 each bind NAD(+). Catalysis depends on K141, which acts as the N6-AMP-lysine intermediate. 4 residues coordinate NAD(+): R162, E198, K314, and K338. The Zn(2+) site is built by C429, C432, C445, and C451. Residues 607–691 (TAGDALSGQT…SLLESHGIEI (85 aa)) form the BRCT domain.

It belongs to the NAD-dependent DNA ligase family. LigA subfamily. Requires Mg(2+) as cofactor. The cofactor is Mn(2+).

The catalysed reaction is NAD(+) + (deoxyribonucleotide)n-3'-hydroxyl + 5'-phospho-(deoxyribonucleotide)m = (deoxyribonucleotide)n+m + AMP + beta-nicotinamide D-nucleotide.. Its function is as follows. DNA ligase that catalyzes the formation of phosphodiester linkages between 5'-phosphoryl and 3'-hydroxyl groups in double-stranded DNA using NAD as a coenzyme and as the energy source for the reaction. It is essential for DNA replication and repair of damaged DNA. The polypeptide is DNA ligase (Natronomonas pharaonis (strain ATCC 35678 / DSM 2160 / CIP 103997 / JCM 8858 / NBRC 14720 / NCIMB 2260 / Gabara) (Halobacterium pharaonis)).